Consider the following 152-residue polypeptide: MDEQEIQRLVEEVSLQYFGMPFLHKAMFNSRLRTTGGRYLLNTHNIELNYRYYEMYGKEELVGIVKHELCHYHLHITGRGYKHRDKDFRELLKAVDAPRFCKRMVNAEKEKRVYVYECMECLLQYVRRRQINTKRYVCGKCKGKLNLIKKTS.

The region spanning 7–148 (QRLVEEVSLQ…GKCKGKLNLI (142 aa)) is the SprT-like domain. Position 67 (His67) interacts with Zn(2+). Glu68 is an active-site residue. His71 is a binding site for Zn(2+).

The protein belongs to the SprT family. Requires Zn(2+) as cofactor.

It localises to the cytoplasm. This Bacillus anthracis (strain A0248) protein is Protein SprT-like.